Reading from the N-terminus, the 318-residue chain is Apo-salmochelin esterase (318 aa).

A helical transmembrane segment spans residues 13-32 (KAIFFHLSCLTLICSAQVYA). Active-site residues include serine 189 and histidine 287.

This sequence belongs to the esterase D family. As to quaternary structure, monomer.

It localises to the cell inner membrane. It catalyses the reaction enterobactin + H2O = N-(2,3-dihydroxybenzoyl)-L-serine trimer. It carries out the reaction monoglucosyl-enterobactin + H2O = [N-(2,3-dihydroxybenzoyl)-L-seryl]2-N-(C-5-[deoxy-beta-D-glucosyl]-2,3-dihydroxybenzoyl)-L-serine + H(+). The catalysed reaction is diglucosyl-enterobactin + H2O = N-(2,3-dihydroxybenzoyl)-L-seryl-[N-(C-5-[deoxy-beta-D-glucosyl]-2,3-dihydroxybenzoyl)-L-serine]2 + H(+). The enzyme catalyses triglucosyl-enterobactin + H2O = [N-(C-5-[deoxy-beta-D-glucosyl]-2,3-dihydroxybenzoyl)-L-serine]3 + H(+). Catalyzes the hydrolysis of both the apo and Fe3(+)-bound forms of enterobactin (Ent), monoglucosyl-C-Ent (MGE), diglucosyl-C-Ent (DGE) and triglucosyl-C-Ent (TGE). It prefers apo siderophores as substrates and hydrolyzes the Fe3(+)-bound siderophores very inefficiently. Tends to hydrolyze the trilactone just once to produce linearized trimers. May hydrolyze and linearize some or all of apo enterobactins while they are being exported. The polypeptide is Apo-salmochelin esterase (Escherichia coli O6:H1 (strain CFT073 / ATCC 700928 / UPEC)).